A 388-amino-acid polypeptide reads, in one-letter code: Protein-glutamate methylesterase/protein-glutamine glutaminase 4 (388 aa).

The region spanning 4–121 (KVLVVDDSGF…SGDASKIKRL (118 aa)) is the Response regulatory domain. At Asp-55 the chain carries 4-aspartylphosphate. The interval 137 to 196 (SGASAPASVPQPAKPAAPIPVREPPKPAAPVTRPAEPRAKAPPAKPEPKPEVKAAKSRRT) is disordered. Over residues 148 to 164 (PAKPAAPIPVREPPKPA) the composition is skewed to pro residues. The CheB-type methylesterase domain maps to 197-388 (PRQDYKVVLI…FAPRLIDGVG (192 aa)). Catalysis depends on residues Ser-209, His-236, and Asp-332.

Belongs to the CheB family. Phosphorylated by CheA. Phosphorylation of the N-terminal regulatory domain activates the methylesterase activity.

The protein resides in the cytoplasm. The catalysed reaction is [protein]-L-glutamate 5-O-methyl ester + H2O = L-glutamyl-[protein] + methanol + H(+). It carries out the reaction L-glutaminyl-[protein] + H2O = L-glutamyl-[protein] + NH4(+). Its function is as follows. Involved in chemotaxis. Part of a chemotaxis signal transduction system that modulates chemotaxis in response to various stimuli. Catalyzes the demethylation of specific methylglutamate residues introduced into the chemoreceptors (methyl-accepting chemotaxis proteins or MCP) by CheR. Also mediates the irreversible deamidation of specific glutamine residues to glutamic acid. In Hahella chejuensis (strain KCTC 2396), this protein is Protein-glutamate methylesterase/protein-glutamine glutaminase 4.